We begin with the raw amino-acid sequence, 329 residues long: GMP reductase (329 aa).

The active-site Thioimidate intermediate is the Cys178. 207–230 (VIADGGIRTHGDIAKSIRMGATMV) contributes to the NADP(+) binding site.

It belongs to the IMPDH/GMPR family. GuaC type 2 subfamily.

The enzyme catalyses IMP + NH4(+) + NADP(+) = GMP + NADPH + 2 H(+). Functionally, catalyzes the irreversible NADPH-dependent deamination of GMP to IMP. It functions in the conversion of nucleobase, nucleoside and nucleotide derivatives of G to A nucleotides, and in maintaining the intracellular balance of A and G nucleotides. This chain is GMP reductase, found in Lactococcus lactis subsp. cremoris (strain SK11).